The following is an 89-amino-acid chain: Small ribosomal subunit protein uS15 (89 aa).

It belongs to the universal ribosomal protein uS15 family. In terms of assembly, part of the 30S ribosomal subunit. Forms a bridge to the 50S subunit in the 70S ribosome, contacting the 23S rRNA.

In terms of biological role, one of the primary rRNA binding proteins, it binds directly to 16S rRNA where it helps nucleate assembly of the platform of the 30S subunit by binding and bridging several RNA helices of the 16S rRNA. Its function is as follows. Forms an intersubunit bridge (bridge B4) with the 23S rRNA of the 50S subunit in the ribosome. The polypeptide is Small ribosomal subunit protein uS15 (Rhizobium johnstonii (strain DSM 114642 / LMG 32736 / 3841) (Rhizobium leguminosarum bv. viciae)).